A 427-amino-acid chain; its full sequence is Glycophorin-binding protein-related antigen (427 aa).

8 GBP repeats span residues 109-149, 150-189, 190-229, 230-269, 270-307, 308-347, 348-387, and 388-427; these read LTSA…DELE, TSAD…DEVE, SSAD…DELE, TSAD…EVET, SADP…SEVE, TSAD…DELE, and TSAD…DESS.

The chain is Glycophorin-binding protein-related antigen (GBPH) from Plasmodium falciparum (isolate FCBR / Columbia).